The sequence spans 240 residues: Uridylate kinase (240 aa).

Lys12–Gly15 contributes to the ATP binding site. The segment at Gly20–Gly25 is involved in allosteric activation by GTP. Gly54 contacts UMP. The ATP site is built by Gly55 and Arg59. Residues Asp74 and Thr135–Thr142 each bind UMP. Asn163, Tyr169, and Asp172 together coordinate ATP.

It belongs to the UMP kinase family. As to quaternary structure, homohexamer.

It localises to the cytoplasm. It carries out the reaction UMP + ATP = UDP + ADP. It functions in the pathway pyrimidine metabolism; CTP biosynthesis via de novo pathway; UDP from UMP (UMPK route): step 1/1. Its activity is regulated as follows. Allosterically activated by GTP. Inhibited by UTP. In terms of biological role, catalyzes the reversible phosphorylation of UMP to UDP. This is Uridylate kinase from Geobacillus thermodenitrificans (strain NG80-2).